A 301-amino-acid polypeptide reads, in one-letter code: Probable alpha-L-glutamate ligase (301 aa).

One can recognise an ATP-grasp domain in the interval 104 to 287; sequence LQILARKGIG…VAGKIIEYLE (184 aa). ATP is bound by residues Lys141, 178–179, Asp187, and 211–213; these read EY and RSN. Residues Asp248, Glu260, and Asn262 each coordinate Mg(2+). Residues Asp248, Glu260, and Asn262 each coordinate Mn(2+).

Belongs to the RimK family. Requires Mg(2+) as cofactor. The cofactor is Mn(2+).

This Picosynechococcus sp. (strain ATCC 27264 / PCC 7002 / PR-6) (Agmenellum quadruplicatum) protein is Probable alpha-L-glutamate ligase.